Reading from the N-terminus, the 346-residue chain is Nicotinate-nucleotide--dimethylbenzimidazole phosphoribosyltransferase (346 aa).

Glu-313 serves as the catalytic Proton acceptor.

Belongs to the CobT family.

It carries out the reaction 5,6-dimethylbenzimidazole + nicotinate beta-D-ribonucleotide = alpha-ribazole 5'-phosphate + nicotinate + H(+). It participates in nucleoside biosynthesis; alpha-ribazole biosynthesis; alpha-ribazole from 5,6-dimethylbenzimidazole: step 1/2. In terms of biological role, catalyzes the synthesis of alpha-ribazole-5'-phosphate from nicotinate mononucleotide (NAMN) and 5,6-dimethylbenzimidazole (DMB). The chain is Nicotinate-nucleotide--dimethylbenzimidazole phosphoribosyltransferase from Parabacteroides distasonis (strain ATCC 8503 / DSM 20701 / CIP 104284 / JCM 5825 / NCTC 11152).